Reading from the N-terminus, the 267-residue chain is uncharacterized protein (267 aa).

This is an uncharacterized protein from Saccharomyces cerevisiae (strain ATCC 204508 / S288c) (Baker's yeast).